A 67-amino-acid polypeptide reads, in one-letter code: MFFALCVALSGREVNKTRRTVNGVDHKDFFRDGKVGDWKNHLSVTLETENKIDMTIKEKFQGSGTQD.

Position 31 to 33 (31 to 33 (RDG)) interacts with 3'-phosphoadenylyl sulfate.

This sequence belongs to the sulfotransferase 1 family.

Its subcellular location is the cytoplasm. In terms of biological role, sulfotransferase that utilizes 3'-phospho-5'-adenylyl sulfate (PAPS) as sulfonate donor. This chain is Putative cytosolic sulfotransferase 2 (SOT2), found in Arabidopsis thaliana (Mouse-ear cress).